The sequence spans 158 residues: NADH-quinone oxidoreductase subunit B 1 (158 aa).

Cys-37, Cys-38, Cys-102, and Cys-132 together coordinate [4Fe-4S] cluster.

It belongs to the complex I 20 kDa subunit family. In terms of assembly, NDH-1 is composed of 14 different subunits. Subunits NuoB, C, D, E, F, and G constitute the peripheral sector of the complex. [4Fe-4S] cluster serves as cofactor.

The protein resides in the cell inner membrane. The enzyme catalyses a quinone + NADH + 5 H(+)(in) = a quinol + NAD(+) + 4 H(+)(out). NDH-1 shuttles electrons from NADH, via FMN and iron-sulfur (Fe-S) centers, to quinones in the respiratory chain. Couples the redox reaction to proton translocation (for every two electrons transferred, four hydrogen ions are translocated across the cytoplasmic membrane), and thus conserves the redox energy in a proton gradient. The protein is NADH-quinone oxidoreductase subunit B 1 of Azoarcus sp. (strain BH72).